The sequence spans 758 residues: Thiosulfate reductase molybdopterin-containing subunit PhsA (758 aa).

Residues 1-30 constitute a signal peptide (tat-type signal); sequence MSISRRSFLQGVGIGCSACALGAFPPGALA. Residues 41-97 enclose the 4Fe-4S Mo/W bis-MGD-type domain; sequence TTLTPSLCEMCSFRCPIQAQVVNNKTVFIQGNPSAPQQGTRICARGGSGVSLVNDPQ. Positions 48, 51, 55, and 83 each coordinate [4Fe-4S] cluster.

This sequence belongs to the prokaryotic molybdopterin-containing oxidoreductase family. In terms of assembly, composed of three subunits: PhsA, PhsB and PhsC. [4Fe-4S] cluster is required as a cofactor. The cofactor is Mo-bis(molybdopterin guanine dinucleotide). Post-translationally, predicted to be exported by the Tat system. The position of the signal peptide cleavage has not been experimentally proven.

Its subcellular location is the periplasm. The catalysed reaction is a quinone + hydrogen sulfide + sulfite + 2 H(+) = thiosulfate + a quinol. In terms of biological role, component of the PhsABC thiosulfate reductase that catalyzes the reduction of thiosulfate to sulfite and hydrogen sulfide, with menaquinol as the sole electron donor. Proton motive force (PMF) is required to drive transmembrane electron transfer within the reductase. The PhsA subunit contains the active site molybdenum-bis(molybdopterin guanine dinucleotide) (Mo-bis-MGD) cofactor. The polypeptide is Thiosulfate reductase molybdopterin-containing subunit PhsA (Salmonella typhimurium (strain LT2 / SGSC1412 / ATCC 700720)).